Reading from the N-terminus, the 172-residue chain is MLSSLQNPRQAAAQLMNFAMILSTAFMMWKGLSVATDSPSPIVVVLSGSMEPAFQRGDLLLLWNRNVWQETAVGEVVVYNVKGKDIPIVHRVVRKFGTGDKAKLLTKGDNNNADDTDLYARGQDYLEREDIIGSVIGYFPFVGYVTILLSEHPWLKTVMLGIMGLLVVIQRE.

The Cytoplasmic segment spans residues 1–14; it reads MLSSLQNPRQAAAQ. The helical; Signal-anchor for type II membrane protein transmembrane segment at 15-35 threads the bilayer; the sequence is LMNFAMILSTAFMMWKGLSVA. Topologically, residues 36-172 are lumenal; sequence TDSPSPIVVV…MGLLVVIQRE (137 aa). Catalysis depends on charge relay system residues S49, H90, and D115. The interval 158–169 is C-terminal short (CTS) helix; the sequence is VMLGIMGLLVVI.

It belongs to the peptidase S26B family. In terms of assembly, component of the signal peptidase complex (SPC) composed of a catalytic subunit SEC11 and three accessory subunits SPC1, SPC2 and SPC3. The complex induces a local thinning of the ER membrane which is used to measure the length of the signal peptide (SP) h-region of protein substrates. This ensures the selectivity of the complex towards h-regions shorter than 18-20 amino acids. SPC associates with the translocon complex.

The protein resides in the endoplasmic reticulum membrane. It carries out the reaction Cleavage of hydrophobic, N-terminal signal or leader sequences from secreted and periplasmic proteins.. Catalytic component of the signal peptidase complex (SPC) which catalyzes the cleavage of N-terminal signal sequences from nascent proteins as they are translocated into the lumen of the endoplasmic reticulum. Specifically cleaves N-terminal signal peptides that contain a hydrophobic alpha-helix (h-region) shorter than 18-20 amino acids. The sequence is that of Signal peptidase complex catalytic subunit SEC11 (SEC11) from Metarhizium robertsii (strain ARSEF 23 / ATCC MYA-3075) (Metarhizium anisopliae (strain ARSEF 23)).